We begin with the raw amino-acid sequence, 297 residues long: Protein AKTIP homolog (297 aa).

The segment at 13 to 75 is disordered; sequence FLSDLDEKSS…QRSPSGSSPE (63 aa). Residues 17–42 show a composition bias toward basic and acidic residues; it reads LDEKSSSSPHDEKKPGDGREVREEKS. A compositionally biased stretch (polar residues) spans 59–75; that stretch reads MNLSIARQRSPSGSSPE. Residues 84–232 form the UBC core domain; sequence FLEYTLMAEY…VNECLRRCHN (149 aa).

Belongs to the ubiquitin-conjugating enzyme family. FTS subfamily.

In Nematostella vectensis (Starlet sea anemone), this protein is Protein AKTIP homolog.